Here is a 157-residue protein sequence, read N- to C-terminus: V-type proton ATPase 16 kDa proteolipid subunit c (157 aa).

At M1 to Y10 the chain is on the lumenal side. A helical membrane pass occupies residues G11 to G33. At T34–S55 the chain is on the cytoplasmic side. The helical transmembrane segment at I56–I76 threads the bilayer. The Lumenal portion of the chain corresponds to A77–H94. Residues L95–G116 form a helical membrane-spanning segment. Over D117–R128 the chain is Cytoplasmic. The helical transmembrane segment at L129 to L154 threads the bilayer. Topologically, residues Y155–K157 are lumenal.

The protein belongs to the V-ATPase proteolipid subunit family. In terms of assembly, V-ATPase is a heteromultimeric enzyme made up of two complexes: the ATP-hydrolytic V1 complex and the proton translocation V0 complex. The V1 complex consists of three catalytic AB heterodimers that form a heterohexamer, three peripheral stalks each consisting of EG heterodimers, one central rotor including subunits D and F, and the regulatory subunits C and H. The proton translocation complex V0 consists of the proton transport subunit a, a ring of proteolipid subunits c9c'', rotary subunit d, subunits e and f, and the accessory subunits VhaAC45 and ATP6AP2.

The protein resides in the membrane. Its function is as follows. Proton-conducting pore forming subunit of the V0 complex of vacuolar(H+)-ATPase (V-ATPase), a multisubunit enzyme composed of a peripheral complex (V1) that hydrolyzes ATP and a membrane integral complex (V0) that translocates protons. V-ATPase is responsible for acidifying and maintaining the pH of intracellular compartments and in some cell types, is targeted to the plasma membrane, where it is responsible for acidifying the extracellular environment. The polypeptide is V-type proton ATPase 16 kDa proteolipid subunit c (Aedes aegypti (Yellowfever mosquito)).